A 266-amino-acid polypeptide reads, in one-letter code: MRIDVVSIFPEYLAPLELSLIGKARQDGLLELNVHDLRTFTTDKHRTVDDTPYGGGAGMVMKPEPWAQALESVAAARENSKPVLIVPSPAGEKFNQALAYELAEEEQLVFACGRYEGIDERVIDWAQDHFRVRPVSLGDYVLNGGEVAVLAMVEAIGRLLPGVVGNPESLVEESHSDGLLEYPVYTKPSAWRDHDVPPILLSGNHGKIAQWRRHEQFRRTAERRPDLMEGLDAGVLSRADRQALADLGYDVVDGRLRAKPGGDTEN.

S-adenosyl-L-methionine contacts are provided by residues G113 and 137 to 142 (LGDYVL).

This sequence belongs to the RNA methyltransferase TrmD family. As to quaternary structure, homodimer.

The protein resides in the cytoplasm. The enzyme catalyses guanosine(37) in tRNA + S-adenosyl-L-methionine = N(1)-methylguanosine(37) in tRNA + S-adenosyl-L-homocysteine + H(+). Its function is as follows. Specifically methylates guanosine-37 in various tRNAs. The polypeptide is tRNA (guanine-N(1)-)-methyltransferase (Paenarthrobacter aurescens (strain TC1)).